The following is a 326-amino-acid chain: Peroxidase 39 (326 aa).

The signal sequence occupies residues 1–23 (MTRFGLALLMILVIQGLVTFSEA). 4 disulfide bridges follow: Cys-34-Cys-114, Cys-67-Cys-72, Cys-120-Cys-322, and Cys-199-Cys-232. His-65 functions as the Proton acceptor in the catalytic mechanism. Ca(2+) is bound by residues Asp-66, Val-69, Gly-71, Asp-73, and Ser-75. Residue Asn-79 is glycosylated (N-linked (GlcNAc...) asparagine). Pro-162 provides a ligand contact to substrate. Asn-167 carries N-linked (GlcNAc...) asparagine glycosylation. Position 192 (His-192) interacts with heme b. Thr-193 contributes to the Ca(2+) binding site. N-linked (GlcNAc...) asparagine glycans are attached at residues Asn-208 and Asn-238. Residues Asp-245, Ser-248, and Asp-253 each coordinate Ca(2+).

Belongs to the peroxidase family. Classical plant (class III) peroxidase subfamily. Heme b serves as cofactor. Requires Ca(2+) as cofactor. As to expression, slightly expressed in roots.

It is found in the secreted. It catalyses the reaction 2 a phenolic donor + H2O2 = 2 a phenolic radical donor + 2 H2O. Its function is as follows. Removal of H(2)O(2), oxidation of toxic reductants, biosynthesis and degradation of lignin, suberization, auxin catabolism, response to environmental stresses such as wounding, pathogen attack and oxidative stress. These functions might be dependent on each isozyme/isoform in each plant tissue. The polypeptide is Peroxidase 39 (PER39) (Arabidopsis thaliana (Mouse-ear cress)).